The sequence spans 332 residues: tRNA-dihydrouridine(20/20a) synthase (332 aa).

FMN contacts are provided by residues 22–24 and glutamine 75; that span reads PMM. Cysteine 105 functions as the Proton donor in the catalytic mechanism. Residues lysine 144, histidine 177, 217–219, and 239–240 each bind FMN; these read NGG and GR.

This sequence belongs to the Dus family. DusA subfamily. Requires FMN as cofactor.

The enzyme catalyses 5,6-dihydrouridine(20) in tRNA + NADP(+) = uridine(20) in tRNA + NADPH + H(+). The catalysed reaction is 5,6-dihydrouridine(20) in tRNA + NAD(+) = uridine(20) in tRNA + NADH + H(+). It catalyses the reaction 5,6-dihydrouridine(20a) in tRNA + NADP(+) = uridine(20a) in tRNA + NADPH + H(+). It carries out the reaction 5,6-dihydrouridine(20a) in tRNA + NAD(+) = uridine(20a) in tRNA + NADH + H(+). Catalyzes the synthesis of 5,6-dihydrouridine (D), a modified base found in the D-loop of most tRNAs, via the reduction of the C5-C6 double bond in target uridines. Specifically modifies U20 and U20a in tRNAs. The sequence is that of tRNA-dihydrouridine(20/20a) synthase from Xylella fastidiosa (strain Temecula1 / ATCC 700964).